We begin with the raw amino-acid sequence, 568 residues long: Urease subunit alpha (568 aa).

The Urease domain occupies 132–568; that stretch reads GAIDTHVHYI…LPLAQLYNLF (437 aa). Ni(2+) contacts are provided by His137, His139, and Lys219. Residue Lys219 is modified to N6-carboxylysine. Substrate is bound at residue His221. Residues His248 and His274 each contribute to the Ni(2+) site. The active-site Proton donor is His322. Position 362 (Asp362) interacts with Ni(2+).

It belongs to the metallo-dependent hydrolases superfamily. Urease alpha subunit family. In terms of assembly, heterotrimer of UreA (gamma), UreB (beta) and UreC (alpha) subunits. Three heterotrimers associate to form the active enzyme. Ni cation serves as cofactor. Carboxylation allows a single lysine to coordinate two nickel ions.

The protein resides in the cytoplasm. The catalysed reaction is urea + 2 H2O + H(+) = hydrogencarbonate + 2 NH4(+). Its pathway is nitrogen metabolism; urea degradation; CO(2) and NH(3) from urea (urease route): step 1/1. This Azobacteroides pseudotrichonymphae genomovar. CFP2 protein is Urease subunit alpha.